Reading from the N-terminus, the 204-residue chain is Glycerol-3-phosphate acyltransferase (204 aa).

5 helical membrane-spanning segments follow: residues 8-28 (ILIF…CYIF), 53-73 (VLAA…VVIA), 81-101 (FITA…IFFG), 116-136 (FGFS…VAII), and 155-175 (VIFT…IIIL).

Belongs to the PlsY family. As to quaternary structure, probably interacts with PlsX.

Its subcellular location is the cell inner membrane. It carries out the reaction an acyl phosphate + sn-glycerol 3-phosphate = a 1-acyl-sn-glycero-3-phosphate + phosphate. Its pathway is lipid metabolism; phospholipid metabolism. Functionally, catalyzes the transfer of an acyl group from acyl-phosphate (acyl-PO(4)) to glycerol-3-phosphate (G3P) to form lysophosphatidic acid (LPA). This enzyme utilizes acyl-phosphate as fatty acyl donor, but not acyl-CoA or acyl-ACP. This Francisella tularensis subsp. holarctica (strain OSU18) protein is Glycerol-3-phosphate acyltransferase.